A 64-amino-acid chain; its full sequence is AEGEGQRDLLKAVAHILGIRDLAGINLDSSLADLGLDSLMGVEVRQTLEREHDLVLSMREVRQL.

One can recognise a Carrier domain in the interval 1 to 64; that stretch reads AEGEGQRDLL…VLSMREVRQL (64 aa). S38 carries the post-translational modification O-(pantetheine 4'-phosphoryl)serine; alternate. Phosphoserine; alternate is present on S38.

In terms of assembly, homodimer which is arranged in a head to tail fashion. Interacts with CEACAM1; this interaction is insulin and phosphorylation-dependent; reduces fatty-acid synthase activity.

It is found in the cytoplasm. The protein localises to the melanosome. It catalyses the reaction acetyl-CoA + n malonyl-CoA + 2n NADPH + 2n H(+) = a long-chain fatty acid + (n+1) CoA + n CO2 + 2n NADP(+).. In terms of biological role, fatty acid synthetase catalyzes the formation of long-chain fatty acids from acetyl-CoA, malonyl-CoA and NADPH. This multifunctional protein has 7 catalytic activities as an acyl carrier protein. This Oryctolagus cuniculus (Rabbit) protein is Fatty acid synthase (FASN).